Consider the following 389-residue polypeptide: Succinyl-diaminopimelate desuccinylase (389 aa).

H75 lines the Zn(2+) pocket. The active site involves D77. D108 is a binding site for Zn(2+). Residue E142 is the Proton acceptor of the active site. Zn(2+) is bound by residues E143, E171, and H357.

The protein belongs to the peptidase M20A family. DapE subfamily. In terms of assembly, homodimer. Zn(2+) is required as a cofactor. It depends on Co(2+) as a cofactor.

The catalysed reaction is N-succinyl-(2S,6S)-2,6-diaminopimelate + H2O = (2S,6S)-2,6-diaminopimelate + succinate. Its pathway is amino-acid biosynthesis; L-lysine biosynthesis via DAP pathway; LL-2,6-diaminopimelate from (S)-tetrahydrodipicolinate (succinylase route): step 3/3. Its function is as follows. Catalyzes the hydrolysis of N-succinyl-L,L-diaminopimelic acid (SDAP), forming succinate and LL-2,6-diaminopimelate (DAP), an intermediate involved in the bacterial biosynthesis of lysine and meso-diaminopimelic acid, an essential component of bacterial cell walls. The chain is Succinyl-diaminopimelate desuccinylase from Paracidovorax citrulli (strain AAC00-1) (Acidovorax citrulli).